The following is a 432-amino-acid chain: Ornithine decarboxylase (432 aa).

At K98 the chain carries N6-(pyridoxal phosphate)lysine. Pyridoxal 5'-phosphate-binding positions include S229, G266, and 296-299 (EPGR). 341–342 (FD) lines the substrate pocket. C377 serves as the catalytic Proton donor; shared with dimeric partner. D378 is a binding site for substrate. Y407 serves as a coordination point for pyridoxal 5'-phosphate.

This sequence belongs to the Orn/Lys/Arg decarboxylase class-II family. Homodimer. Only the dimer is catalytically active, as the active sites are constructed of residues from both monomers. The cofactor is pyridoxal 5'-phosphate.

The protein localises to the cytoplasm. The enzyme catalyses L-ornithine + H(+) = putrescine + CO2. It participates in amine and polyamine biosynthesis; putrescine biosynthesis via L-ornithine pathway; putrescine from L-ornithine: step 1/1. Inhibited by antizyme (AZ) OAZ1 in response to polyamine levels. AZ inhibits the assembly of the functional homodimer by binding to ODC monomers and targeting them for ubiquitin-independent proteolytic destruction by the 26S proteasome. In terms of biological role, catalyzes the first and rate-limiting step of polyamine biosynthesis that converts ornithine into putrescine, which is the precursor for the polyamines, spermidine and spermine. Polyamines are essential for cell proliferation and are implicated in cellular processes, ranging from DNA replication to apoptosis. The polypeptide is Ornithine decarboxylase (spe1) (Schizosaccharomyces pombe (strain 972 / ATCC 24843) (Fission yeast)).